Consider the following 1349-residue polypeptide: Patatin-like phospholipase domain-containing protein 7 (1349 aa).

Topologically, residues 1–36 (MQKEEDVCPEAGYCLGTALSSWGLHFMEEHSQSTML) are lumenal. The chain crosses the membrane as a helical span at residues 37–57 (MGIGIGVLLTLAFVGLAAFFV). The Cytoplasmic portion of the chain corresponds to 58-1349 (YRKVSRFRRA…DQGPRLYRPS (1292 aa)). 170-297 (VLGHFEKPLF…VRVVQIIMVR (128 aa)) is an a nucleoside 3',5'-cyclic phosphate binding site. Positions 340–361 (MSYGPEEQLERSPRLSEFNSSD) are disordered. Residues serine 341 and serine 377 each carry the phosphoserine modification. A nucleoside 3',5'-cyclic phosphate is bound by residues 496-599 (FLHV…VVRR) and 610-715 (ALDW…LGEK). The involved in the binding to lipid droplets stretch occupies residues 678-964 (VHAVRDSELA…RGCAQVGILR (287 aa)). The PNPLA domain occupies 947-1113 (LVLGGGGARG…INNLPADVAR (167 aa)). The GXGXXG motif lies at 951–956 (GGGARG). Positions 978–982 (GTSIG) match the GXSXG motif. Serine 980 functions as the Nucleophile in the catalytic mechanism. The active-site Proton acceptor is the aspartate 1100. Residues 1100 to 1102 (DGG) carry the DGA/G motif. Serine 1277 is modified (phosphoserine). A Phosphothreonine modification is found at threonine 1281. Positions 1297–1349 (DFQSTGIELDSDSECEPSMSQGPHSLTSPKQSQDSFPWLPNQDDQGPRLYRPS) are disordered. Residues 1314 to 1331 (SMSQGPHSLTSPKQSQDS) are compositionally biased toward polar residues.

The protein belongs to the NTE family. As to expression, expressed in the brain, liver, kidney, lung and testis.

The protein localises to the endoplasmic reticulum membrane. The protein resides in the lipid droplet. The catalysed reaction is a 1-acyl-sn-glycero-3-phosphocholine + H2O = sn-glycerol 3-phosphocholine + a fatty acid + H(+). It catalyses the reaction 1-(9Z-octadecenoyl)-sn-glycero-3-phosphocholine + H2O = sn-glycerol 3-phosphocholine + (9Z)-octadecenoate + H(+). The enzyme catalyses 1-(9Z-octadecenoyl)-sn-glycero-3-phosphoethanolamine + H2O = sn-glycero-3-phosphoethanolamine + (9Z)-octadecenoate + H(+). It carries out the reaction 1-(9Z-octadecenoyl)-sn-glycero-3-phospho-L-serine + H2O = sn-glycero-3-phospho-L-serine + (9Z)-octadecenoate + H(+). The catalysed reaction is 1-hexadecanoyl-sn-glycero-3-phosphocholine + H2O = sn-glycerol 3-phosphocholine + hexadecanoate + H(+). It catalyses the reaction 1-hexadecanoyl-sn-glycero-3-phosphate + H2O = sn-glycerol 3-phosphate + hexadecanoate + H(+). Lysophospholipase which preferentially deacylates unsaturated lysophosphatidylcholine (C18:1), generating glycerophosphocholine. Also can deacylate, to a lesser extent, lysophosphatidylethanolamine (C18:1), lysophosphatidyl-L-serine (C18:1) and lysophosphatidic acid (C16:0). The sequence is that of Patatin-like phospholipase domain-containing protein 7 (Pnpla7) from Rattus norvegicus (Rat).